An 85-amino-acid polypeptide reads, in one-letter code: Protein AC4 (85 aa).

Residue Gly-2 is the site of N-myristoyl glycine; by host attachment.

This sequence belongs to the geminiviridae protein AC4/C4 family. Interacts with Arabidopsis thaliana ASK7/ASK-eta and ASK6/ASK-zeta proteins. In terms of processing, phosphorylated by Arabidopsis thaliana ASK7/ASK-eta mainly on threonine and serine residues.

The protein localises to the host cell membrane. Its function is as follows. Pathogenicity determinant. May act as a suppressor of RNA-mediated gene silencing, also known as post-transcriptional gene silencing (PTGS), a mechanism of plant viral defense that limits the accumulation of viral RNAs. May repress the AL61 promoter. The protein is Protein AC4 of Solanum lycopersicum (Tomato).